The sequence spans 233 residues: Adenosine 5'-phosphosulfate reductase (233 aa).

[4Fe-4S] cluster contacts are provided by Cys120, Cys121, Cys203, and Cys206. The active-site Nucleophile; cysteine thiosulfonate intermediate is Cys229.

It belongs to the PAPS reductase family. CysH subfamily. Requires [4Fe-4S] cluster as cofactor.

It localises to the cytoplasm. The catalysed reaction is [thioredoxin]-disulfide + sulfite + AMP + 2 H(+) = adenosine 5'-phosphosulfate + [thioredoxin]-dithiol. It functions in the pathway sulfur metabolism; hydrogen sulfide biosynthesis; sulfite from sulfate. Catalyzes the formation of sulfite from adenosine 5'-phosphosulfate (APS) using thioredoxin as an electron donor. This is Adenosine 5'-phosphosulfate reductase from Bacillus velezensis (strain DSM 23117 / BGSC 10A6 / LMG 26770 / FZB42) (Bacillus amyloliquefaciens subsp. plantarum).